Here is a 392-residue protein sequence, read N- to C-terminus: MKHIALLGSTGSIGTQTLDIVAEYPERFAVTGMTAHSNMELLAEQIRRFRPQVVAVGSEARRAALAALLAGFDGMPEMFVGEKGCCTVASQAPAEVVVTGIVGCAGLMPTLAAVDAGRDLALANKETLVAGGPVVMPRIRARGVKLLPVDSEHSAIFQCLQGVPEGALKRILLTASGGAFRDWPVEKLAEATTADALKHPNWVMGAKITVDSATLMNKGLEVIEAHWLFGLDYDRIEIVIHPQSIVHSLVELADTSVVAQLGWPDMRLPILYALSWPERLATPWKPLDLARVGTLTFKEPDHERYPNMRLAYQAGRAGGTYPTVLNAANEEAVAQFLQEKVRFLEMSRLLEATLEAHKSAGEPDLDDVCGADRWAREHVRWLVERSPARVLI.

Positions 10, 11, 12, 13, 38, and 124 each coordinate NADPH. Residue lysine 125 coordinates 1-deoxy-D-xylulose 5-phosphate. Position 126 (glutamate 126) interacts with NADPH. Aspartate 150 is a Mn(2+) binding site. 1-deoxy-D-xylulose 5-phosphate is bound by residues serine 151, glutamate 152, serine 176, and histidine 199. Mn(2+) is bound at residue glutamate 152. Glycine 205 provides a ligand contact to NADPH. The 1-deoxy-D-xylulose 5-phosphate site is built by serine 212, asparagine 217, lysine 218, and glutamate 221. Residue glutamate 221 participates in Mn(2+) binding.

Belongs to the DXR family. Mg(2+) serves as cofactor. Requires Mn(2+) as cofactor.

It carries out the reaction 2-C-methyl-D-erythritol 4-phosphate + NADP(+) = 1-deoxy-D-xylulose 5-phosphate + NADPH + H(+). The protein operates within isoprenoid biosynthesis; isopentenyl diphosphate biosynthesis via DXP pathway; isopentenyl diphosphate from 1-deoxy-D-xylulose 5-phosphate: step 1/6. In terms of biological role, catalyzes the NADPH-dependent rearrangement and reduction of 1-deoxy-D-xylulose-5-phosphate (DXP) to 2-C-methyl-D-erythritol 4-phosphate (MEP). This chain is 1-deoxy-D-xylulose 5-phosphate reductoisomerase, found in Gloeobacter violaceus (strain ATCC 29082 / PCC 7421).